The primary structure comprises 363 residues: MSTTFQTPSRLPTVSAWDQFCEWITSTHNRLYVGWFGLLMIPSLFVSAITFMLAWVAAPSVDMEGIREPIISSLLGGSNVITAAVIPTSAAIGLHLYPLWEATSMDEWLYNGGPYQLIILHFLIAIWTYLGRQWELSYRLGMRPWIAMAFSAPVAAATAVLLVYPMGQGSFSEGLPLGISGTFHFMMAVQAEHNILMHPFHMLGVVGVFGGAFLSAMHGSLVTSSLVQETSSLKSVNTGYKFGQQEATYNLLAGHAGYLGRLFIPDIAFRNSRSIHFLLAVLPTIGIWFAALGIGTMAFNLNGFNFNHSLLDSSGRPIRTEADLLNRATMGLQVMHSVNAHHFSLTLASTESKEIPTIPIMTS.

Helical transmembrane passes span Tyr32–Ile49, His121–Leu136, and Trp145–Ala159. His121 contacts chlorophyll a. Tyr129 serves as a coordination point for pheophytin a. [CaMn4O5] cluster contacts are provided by Glu173 and Glu192. A helical membrane pass occupies residues Phe200–Leu221. Chlorophyll a is bound at residue His201. A quinone contacts are provided by residues His218 and Ala268–Phe269. His218 contacts Fe cation. His276 is a Fe cation binding site. A helical membrane pass occupies residues Leu278–Leu292. [CaMn4O5] cluster is bound by residues His336 and Ala348. The propeptide occupies Ser349–Ser363.

Belongs to the reaction center PufL/M/PsbA/D family. As to quaternary structure, PSII is composed of 1 copy each of membrane proteins PsbA, PsbB, PsbC, PsbD, PsbE, PsbF, PsbH, PsbI, PsbJ, PsbK, PsbL, PsbM, PsbT, PsbX, PsbY, PsbZ, Psb30/Ycf12, peripheral proteins PsbO, CyanoQ (PsbQ), PsbU, PsbV and a large number of cofactors. It forms dimeric complexes. Requires The D1/D2 heterodimer binds P680, chlorophylls that are the primary electron donor of PSII, and subsequent electron acceptors. It shares a non-heme iron and each subunit binds pheophytin, quinone, additional chlorophylls, carotenoids and lipids. D1 provides most of the ligands for the Mn4-Ca-O5 cluster of the oxygen-evolving complex (OEC). There is also a Cl(-1) ion associated with D1 and D2, which is required for oxygen evolution. The PSII complex binds additional chlorophylls, carotenoids and specific lipids. as cofactor. Tyr-164 forms a radical intermediate that is referred to as redox-active TyrZ, YZ or Y-Z. In terms of processing, C-terminally processed by CtpA; processing is essential to allow assembly of the oxygen-evolving complex and thus photosynthetic growth.

It localises to the cellular thylakoid membrane. It catalyses the reaction 2 a plastoquinone + 4 hnu + 2 H2O = 2 a plastoquinol + O2. Its function is as follows. Photosystem II (PSII) is a light-driven water:plastoquinone oxidoreductase that uses light energy to abstract electrons from H(2)O, generating O(2) and a proton gradient subsequently used for ATP formation. It consists of a core antenna complex that captures photons, and an electron transfer chain that converts photonic excitation into a charge separation. The D1/D2 (PsbA/PsbD) reaction center heterodimer binds P680, the primary electron donor of PSII as well as several subsequent electron acceptors. The polypeptide is Photosystem II protein D1 1 (Acaryochloris marina (strain MBIC 11017)).